The chain runs to 342 residues: MVSVKKIVASALVGVLMFSAVGCNMVEKTQAAIDKTTVATVNGEKITLGEVDSHLKGVFAQMKSQYGDKYMDDPQVAQQILQQRQSVVQGLVTDKVLGIEADKLGIKPSEEEIKKKVDEQFENIKKGMGDNFDKALEAEGYTEDTFKDVIKNQVINQAVQDYIIKDVKVTDEDAQKYYDENKQQFVAKDSGVLTKHLLFENEEEAQKAYDEIQSGKTTFNDLFTKYENNKSENKKPIAENLGVVPAENSGLVQEFVDGLKPLKEGEISKPIKTQFGYHIIQAGATYEKGAQLPFDDVKSQIIQILKQQKDSEKFKADMDQWKKDLNVKVYDDKLQEGLKISK.

An N-terminal signal peptide occupies residues methionine 1 to glycine 22. Cysteine 23 is lipidated: N-palmitoyl cysteine. Residue cysteine 23 is the site of S-diacylglycerol cysteine attachment. One can recognise a PpiC domain in the interval aspartate 189–alanine 284.

It belongs to the PrsA family.

The protein resides in the cell membrane. The catalysed reaction is [protein]-peptidylproline (omega=180) = [protein]-peptidylproline (omega=0). Functionally, plays a major role in protein secretion by helping the post-translocational extracellular folding of several secreted proteins. The chain is Foldase protein PrsA from Clostridium perfringens (strain ATCC 13124 / DSM 756 / JCM 1290 / NCIMB 6125 / NCTC 8237 / Type A).